A 105-amino-acid chain; its full sequence is Translation initiation factor 1A 2 (105 aa).

The segment at 1 to 22 (MRKRREGSAAPSTQEVTRVRTP) is disordered. The S1-like domain occupies 17–91 (TRVRTPRKEN…TKADVIWKYT (75 aa)).

It belongs to the eIF-1A family.

In terms of biological role, seems to be required for maximal rate of protein biosynthesis. Enhances ribosome dissociation into subunits and stabilizes the binding of the initiator Met-tRNA(I) to 40 S ribosomal subunits. This is Translation initiation factor 1A 2 (eIF1A2) from Methanosarcina acetivorans (strain ATCC 35395 / DSM 2834 / JCM 12185 / C2A).